The primary structure comprises 187 residues: Large ribosomal subunit protein uL6 (187 aa).

The protein belongs to the universal ribosomal protein uL6 family. As to quaternary structure, part of the 50S ribosomal subunit.

Its function is as follows. This protein binds to the 23S rRNA, and is important in its secondary structure. It is located near the subunit interface in the base of the L7/L12 stalk, and near the tRNA binding site of the peptidyltransferase center. The protein is Large ribosomal subunit protein uL6 of Chloroflexus aggregans (strain MD-66 / DSM 9485).